Here is a 327-residue protein sequence, read N- to C-terminus: Phenylalanine--tRNA ligase alpha subunit (327 aa).

Residue E252 participates in Mg(2+) binding.

It belongs to the class-II aminoacyl-tRNA synthetase family. Phe-tRNA synthetase alpha subunit type 1 subfamily. In terms of assembly, tetramer of two alpha and two beta subunits. The cofactor is Mg(2+).

The protein localises to the cytoplasm. It carries out the reaction tRNA(Phe) + L-phenylalanine + ATP = L-phenylalanyl-tRNA(Phe) + AMP + diphosphate + H(+). The polypeptide is Phenylalanine--tRNA ligase alpha subunit (Shewanella baltica (strain OS223)).